Here is a 78-residue protein sequence, read N- to C-terminus: Putative membrane protein insertion efficiency factor (78 aa).

The protein belongs to the UPF0161 family.

It localises to the cell inner membrane. Its function is as follows. Could be involved in insertion of integral membrane proteins into the membrane. The protein is Putative membrane protein insertion efficiency factor of Prochlorococcus marinus (strain MIT 9312).